Here is a 559-residue protein sequence, read N- to C-terminus: Leucine-rich repeat-containing protein 71 (559 aa).

Positions 1–18 are enriched in low complexity; the sequence is MSSEQSAPGASPRAPRPG. The tract at residues 1-56 is disordered; the sequence is MSSEQSAPGASPRAPRPGTQKSSGAVTKKGERAAKEKPATVLPPVGEEEPKSPEEY. Positions 28–38 are enriched in basic and acidic residues; sequence KKGERAAKEKP. 5 LRR repeats span residues 172-193, 196-216, 221-241, 253-266, and 281-302; these read NLWKVGLTDKTLTTFIELLPLC, TLRKVSLEGNPLPEQSYHKLM, TIAHLSLRNNNIDDRGAQLLG, TLVSLNLGFNHIGD, and SLLWLSLAHNRIQDKGALKLAE. 2 stretches are compositionally biased toward basic and acidic residues: residues 324-348 and 380-391; these read KGTQERSRSPSSSRHGDSKTDREKS and KSWELAKKEEKL. Residues 324–427 are disordered; it reads KGTQERSRSP…PEQKPSRAKG (104 aa).

The sequence is that of Leucine-rich repeat-containing protein 71 (LRRC71) from Homo sapiens (Human).